A 368-amino-acid chain; its full sequence is tRNA/tmRNA (uracil-C(5))-methyltransferase (368 aa).

S-adenosyl-L-methionine-binding residues include Gln-190, Tyr-218, Asn-223, Glu-239, and Asp-301. The active-site Nucleophile is the Cys-326. Glu-360 serves as the catalytic Proton acceptor.

The protein belongs to the class I-like SAM-binding methyltransferase superfamily. RNA M5U methyltransferase family. TrmA subfamily.

It carries out the reaction uridine(54) in tRNA + S-adenosyl-L-methionine = 5-methyluridine(54) in tRNA + S-adenosyl-L-homocysteine + H(+). The catalysed reaction is uridine(341) in tmRNA + S-adenosyl-L-methionine = 5-methyluridine(341) in tmRNA + S-adenosyl-L-homocysteine + H(+). Functionally, dual-specificity methyltransferase that catalyzes the formation of 5-methyluridine at position 54 (m5U54) in all tRNAs, and that of position 341 (m5U341) in tmRNA (transfer-mRNA). In Aliivibrio fischeri (strain MJ11) (Vibrio fischeri), this protein is tRNA/tmRNA (uracil-C(5))-methyltransferase.